A 472-amino-acid chain; its full sequence is Succinate-semialdehyde dehydrogenase [NADP(+)] (472 aa).

Residues 134 to 135 (WN), 158 to 161 (KHAS), and 210 to 211 (GS) each bind NADP(+). E232 functions as the Proton acceptor in the catalytic mechanism. L233 lines the NADP(+) pocket. The active-site Nucleophile is C266. An NADP(+)-binding site is contributed by E363.

It belongs to the aldehyde dehydrogenase family.

It carries out the reaction succinate semialdehyde + NADP(+) + H2O = succinate + NADPH + 2 H(+). In terms of biological role, catalyzes the NADP(+)-dependent oxidation of succinate semialdehyde to succinate. It is believed to be the main source of succinate semialdehyde dehydrogenase activity in Mycobacterium. This chain is Succinate-semialdehyde dehydrogenase [NADP(+)] (gabD1), found in Mycolicibacterium paratuberculosis (strain ATCC BAA-968 / K-10) (Mycobacterium paratuberculosis).